Consider the following 164-residue polypeptide: Transcription factor E (164 aa).

Residues 5 to 87 enclose the HTH TFE/IIEalpha-type domain; sequence NDKVIRGYLL…LWRLDFSDIE (83 aa).

The protein belongs to the TFE family. As to quaternary structure, monomer. Interaction with RNA polymerase subunits RpoF and RpoE is necessary for Tfe stimulatory transcription activity. Able to interact with Tbp and RNA polymerase in the absence of DNA promoter. Interacts both with the preinitiation and elongation complexes.

Its function is as follows. Transcription factor that plays a role in the activation of archaeal genes transcribed by RNA polymerase. Facilitates transcription initiation by enhancing TATA-box recognition by TATA-box-binding protein (Tbp), and transcription factor B (Tfb) and RNA polymerase recruitment. Not absolutely required for transcription in vitro, but particularly important in cases where Tbp or Tfb function is not optimal. It dynamically alters the nucleic acid-binding properties of RNA polymerases by stabilizing the initiation complex and destabilizing elongation complexes. Seems to translocate with the RNA polymerase following initiation and acts by binding to the non template strand of the transcription bubble in elongation complexes. The sequence is that of Transcription factor E from Methanosarcina barkeri (strain Fusaro / DSM 804).